The primary structure comprises 250 residues: Probable transcriptional regulatory protein Rxyl_1318 (250 aa).

Belongs to the TACO1 family.

Its subcellular location is the cytoplasm. This is Probable transcriptional regulatory protein Rxyl_1318 from Rubrobacter xylanophilus (strain DSM 9941 / JCM 11954 / NBRC 16129 / PRD-1).